Reading from the N-terminus, the 647-residue chain is XK-related protein 4 (647 aa).

Residues 1–15 are compositionally biased toward basic and acidic residues; that stretch reads MAAKSDGRLKMKKSS. The interval 1 to 44 is disordered; that stretch reads MAAKSDGRLKMKKSSDVAFTPLQNSDNSGSVQGLAPGLPSGSGA. Residues 21–31 show a composition bias toward polar residues; the sequence is PLQNSDNSGSV. 2 helical membrane passes run 112–132 and 142–162; these read WILA…WLAV and WFGL…VFSF. Serine 197 carries the phosphoserine modification. The disordered stretch occupies residues 197–238; the sequence is SAAGEGEVRPSTPQRQASNASKSNIAATNSGSNSNGATRTSG. Residues 207–236 show a composition bias toward polar residues; that stretch reads STPQRQASNASKSNIAATNSGSNSNGATRT. Transmembrane regions (helical) follow at residues 245–265, 303–323, 328–348, 362–382, 393–415, 425–445, 454–474, and 484–504; these read CSFC…GQIW, HLLA…CIIV, LQAL…WALA, KPIS…TIAA, VFQL…WIVH, WEEI…WFNV, LFIY…LWYL, and FAIP…VFML.

Belongs to the XK family. As to quaternary structure, homodimer; homodimerization takes place upon caspase cleavage. Interacts with the processed C-terminus of XRCC4 (protein XRCC4, C-terminus); interaction promotes the phospholipid scramblase activity. In terms of processing, undergoes proteolytic processing by caspase-3 (CASP3), caspase-6 (CASP6) and caspase-7 (CASP7) to generate the XK-related protein 4, processed form, leading to its activation. In terms of tissue distribution, highly expressed in expressed in the brain; weakly expressed in the spleen, thymus, uterus, blood vessels and fetus.

Its subcellular location is the cell membrane. The enzyme catalyses a 1,2-diacyl-sn-glycero-3-phospho-L-serine(in) = a 1,2-diacyl-sn-glycero-3-phospho-L-serine(out). Its activity is regulated as follows. Phospholipid scramblase activity is activated upon caspase cleavage to generate the XK-related protein 4, processed form. Does not act prior the onset of apoptosis. Homodimerizes upon caspase cleavage. Phospholipid scramblase activity is activated following interaction with the processed C-terminus of XRCC4 (protein XRCC4, C-terminus). Its function is as follows. Phospholipid scramblase that promotes phosphatidylserine exposure on apoptotic cell surface. Phosphatidylserine is a specific marker only present at the surface of apoptotic cells and acts as a specific signal for engulfment. In Mus musculus (Mouse), this protein is XK-related protein 4.